We begin with the raw amino-acid sequence, 211 residues long: Small ribosomal subunit protein uS3c (211 aa).

Residues 39-109 (IREFAESRLP…NVALYVTKTQ (71 aa)) enclose the KH type-2 domain.

This sequence belongs to the universal ribosomal protein uS3 family. As to quaternary structure, part of the 30S ribosomal subunit.

Its subcellular location is the plastid. It is found in the chloroplast. This Ostreococcus tauri protein is Small ribosomal subunit protein uS3c (rps3).